Consider the following 235-residue polypeptide: Purine nucleoside phosphorylase DeoD-type (235 aa).

Histidine 4 is an a purine D-ribonucleoside binding site. Residues glycine 20, arginine 24, arginine 43, and 87-90 (RVGT) each bind phosphate. A purine D-ribonucleoside is bound by residues glutamate 162, 179–181 (EME), and 203–204 (SD). Aspartate 204 serves as the catalytic Proton donor.

The protein belongs to the PNP/UDP phosphorylase family. In terms of assembly, homohexamer; trimer of homodimers.

It catalyses the reaction a purine D-ribonucleoside + phosphate = a purine nucleobase + alpha-D-ribose 1-phosphate. The enzyme catalyses a purine 2'-deoxy-D-ribonucleoside + phosphate = a purine nucleobase + 2-deoxy-alpha-D-ribose 1-phosphate. In terms of biological role, catalyzes the reversible phosphorolytic breakdown of the N-glycosidic bond in the beta-(deoxy)ribonucleoside molecules, with the formation of the corresponding free purine bases and pentose-1-phosphate. The sequence is that of Purine nucleoside phosphorylase DeoD-type from Bacillus cereus (strain ATCC 14579 / DSM 31 / CCUG 7414 / JCM 2152 / NBRC 15305 / NCIMB 9373 / NCTC 2599 / NRRL B-3711).